The sequence spans 233 residues: Protease inhibitor Egf1.0 (233 aa).

The first 28 residues, 1–28 (MYIDTGIMSNNIFLFAFFALVGLTRIEA), serve as a signal peptide directing secretion. The TIL domain occupies 52 to 104 (CRENEHYNSTRIECEEECNDRNNKLCYRFQQFCWCNEGYIRNSSHICVKLEDC). Residues 201-233 (FGKPKNSSAEKKPLETETQAQKFNGIIDQETLD) are disordered.

It belongs to the polydnaviridae EGF-like motif protein family. Interacts with host PAP1 and PAP3.

In terms of biological role, counteracts the host humoral immune response by inhibiting the processing and the amidolytic activity of host PAP3. Thereby, melanization of host hemolymph, normally producing several reactive intermediates toxic for viruses, is deregulated and proper immune response cannot occur. The protein is Protease inhibitor Egf1.0 (O12) of Microplitis demolitor (Parasitoid wasp).